The following is a 113-amino-acid chain: Large ribosomal subunit protein bL19 (113 aa).

It belongs to the bacterial ribosomal protein bL19 family.

Functionally, this protein is located at the 30S-50S ribosomal subunit interface and may play a role in the structure and function of the aminoacyl-tRNA binding site. In Mycobacterium avium (strain 104), this protein is Large ribosomal subunit protein bL19.